Here is a 41-residue protein sequence, read N- to C-terminus: Photosystem I reaction center subunit IX (41 aa).

A helical transmembrane segment spans residues 7–27 (YLSTAPVVATGWFIVTAALLI).

Belongs to the PsaJ family.

Its subcellular location is the plastid. The protein resides in the chloroplast thylakoid membrane. In terms of biological role, may help in the organization of the PsaE and PsaF subunits. This chain is Photosystem I reaction center subunit IX, found in Tetradesmus obliquus (Green alga).